Here is a 175-residue protein sequence, read N- to C-terminus: Shikimate kinase (175 aa).

14 to 19 lines the ATP pocket; sequence GAGKST. A Mg(2+)-binding site is contributed by Ser-18. Positions 36, 60, and 82 each coordinate substrate. Arg-120 lines the ATP pocket. Substrate is bound at residue Arg-140. Gln-157 is a binding site for ATP.

Belongs to the shikimate kinase family. In terms of assembly, monomer. Mg(2+) is required as a cofactor.

It localises to the cytoplasm. It carries out the reaction shikimate + ATP = 3-phosphoshikimate + ADP + H(+). It participates in metabolic intermediate biosynthesis; chorismate biosynthesis; chorismate from D-erythrose 4-phosphate and phosphoenolpyruvate: step 5/7. In terms of biological role, catalyzes the specific phosphorylation of the 3-hydroxyl group of shikimic acid using ATP as a cosubstrate. This is Shikimate kinase from Actinobacillus succinogenes (strain ATCC 55618 / DSM 22257 / CCUG 43843 / 130Z).